Reading from the N-terminus, the 209-residue chain is Large ribosomal subunit protein uL3 (209 aa).

Q150 bears the N5-methylglutamine mark.

It belongs to the universal ribosomal protein uL3 family. As to quaternary structure, part of the 50S ribosomal subunit. Forms a cluster with proteins L14 and L19. In terms of processing, methylated by PrmB.

Its function is as follows. One of the primary rRNA binding proteins, it binds directly near the 3'-end of the 23S rRNA, where it nucleates assembly of the 50S subunit. The sequence is that of Large ribosomal subunit protein uL3 from Vibrio campbellii (strain ATCC BAA-1116).